A 121-amino-acid chain; its full sequence is Fumarate reductase subunit D (121 aa).

3 helical membrane passes run 22–42 (GVWF…LLPL), 57–77 (AFVS…LPMW), and 100–120 (YACY…VIQL).

This sequence belongs to the FrdD family. Part of an enzyme complex containing four subunits: a flavoprotein (FrdA), an iron-sulfur protein (FrdB), and two hydrophobic anchor proteins (FrdC and FrdD).

It is found in the cell inner membrane. Functionally, anchors the catalytic components of the fumarate reductase complex to the cell membrane, binds quinones. This Shewanella putrefaciens (strain CN-32 / ATCC BAA-453) protein is Fumarate reductase subunit D.